The following is a 628-amino-acid chain: Nucleoside-triphosphatase 2 (628 aa).

Positions M1–G25 are cleaved as a signal peptide. E236 (proton acceptor) is an active-site residue. N432 carries N-linked (GlcNAc...) asparagine glycosylation.

Belongs to the GDA1/CD39 NTPase family. In terms of assembly, homotetramer.

Its subcellular location is the secreted. The protein resides in the parasitophorous vacuole. It catalyses the reaction a ribonucleoside 5'-triphosphate + H2O = a ribonucleoside 5'-diphosphate + phosphate + H(+). In terms of biological role, may perform an important processing step in the conversion of high energy nucleotides prior to uptake by the parasite. NTPAse-II has a specific activity 4.5-fold lower than NTPAse-I in hydrolysis of ATP. The primary difference between these isozymes lies in their ability to hydrolyze nucleoside triphosphate versus diphosphate substrates. While NTPAse-II hydrolyzes ATP to ADP and ADP to AMP at almost the same rate, NTPAse-I hydrolyzes ADP to AMP at a much slower rate (0.7% of the rate for ATP). The chain is Nucleoside-triphosphatase 2 (NTP1) from Toxoplasma gondii.